The following is a 262-amino-acid chain: Hydroxyethylthiazole kinase (262 aa).

Met-50 serves as a coordination point for substrate. Positions 125 and 171 each coordinate ATP. Gly-198 lines the substrate pocket.

The protein belongs to the Thz kinase family. The cofactor is Mg(2+).

The enzyme catalyses 5-(2-hydroxyethyl)-4-methylthiazole + ATP = 4-methyl-5-(2-phosphooxyethyl)-thiazole + ADP + H(+). It participates in cofactor biosynthesis; thiamine diphosphate biosynthesis; 4-methyl-5-(2-phosphoethyl)-thiazole from 5-(2-hydroxyethyl)-4-methylthiazole: step 1/1. Its function is as follows. Catalyzes the phosphorylation of the hydroxyl group of 4-methyl-5-beta-hydroxyethylthiazole (THZ). The protein is Hydroxyethylthiazole kinase of Escherichia coli (strain K12 / MC4100 / BW2952).